The chain runs to 279 residues: 3-methyl-2-oxobutanoate hydroxymethyltransferase (279 aa).

Asp43 and Asp82 together coordinate Mg(2+). 3-methyl-2-oxobutanoate contacts are provided by residues 43-44 (DS), Asp82, and Lys112. Position 114 (Glu114) interacts with Mg(2+). The active-site Proton acceptor is Glu181.

Belongs to the PanB family. In terms of assembly, homodecamer; pentamer of dimers. Requires Mg(2+) as cofactor.

The protein resides in the cytoplasm. It catalyses the reaction 3-methyl-2-oxobutanoate + (6R)-5,10-methylene-5,6,7,8-tetrahydrofolate + H2O = 2-dehydropantoate + (6S)-5,6,7,8-tetrahydrofolate. It participates in cofactor biosynthesis; (R)-pantothenate biosynthesis; (R)-pantoate from 3-methyl-2-oxobutanoate: step 1/2. Its function is as follows. Catalyzes the reversible reaction in which hydroxymethyl group from 5,10-methylenetetrahydrofolate is transferred onto alpha-ketoisovalerate to form ketopantoate. This Geobacillus thermodenitrificans (strain NG80-2) protein is 3-methyl-2-oxobutanoate hydroxymethyltransferase.